The primary structure comprises 421 residues: MNDQTLDPAIHIQQLGTAARDAARGLVSASTEAKNKALMEAARALREATPALLEANARDVASVEGKKDEAFIDRLKLDEARVEGMASALEQIAELPDPVGRVLAQFDRPNGLRIERVAVPIGVIGMIYESRPNVGADASALCLKSGNAVILRGGSESRHSTREIVACMQAGLKAAGLPENAVQTVQTTDRNAVAELLKADEHVDLVIPRGGRGLVELVRDQASVPTLLHLDGNCHSYVHEAADVAKAVDVVRNAKLRRTGICGATESVVVDRVIAPALILALADAMAGDCELRGDETAVQLDDRITPASEDDWNTEYLGPIASVKVVDGLDEAIEWVEGHSSHHTDAILTEDAEAARRFMTAIDSAIVMHNASTQFADGGEFGMGAEIGIATGKMHARGPVGLEQLTSFKYLVHGSGQTRE.

It belongs to the gamma-glutamyl phosphate reductase family.

Its subcellular location is the cytoplasm. It catalyses the reaction L-glutamate 5-semialdehyde + phosphate + NADP(+) = L-glutamyl 5-phosphate + NADPH + H(+). It participates in amino-acid biosynthesis; L-proline biosynthesis; L-glutamate 5-semialdehyde from L-glutamate: step 2/2. Its function is as follows. Catalyzes the NADPH-dependent reduction of L-glutamate 5-phosphate into L-glutamate 5-semialdehyde and phosphate. The product spontaneously undergoes cyclization to form 1-pyrroline-5-carboxylate. This Erythrobacter litoralis (strain HTCC2594) protein is Gamma-glutamyl phosphate reductase.